Reading from the N-terminus, the 875-residue chain is F-box only protein 41 (875 aa).

Disordered regions lie at residues 85–110 (ESTSFQGKEQAAGPSPAAPHLLHHHH), 165–194 (SSACSTPPPGPGPGPCPGPASASPASPSPA), and 347–542 (SSSC…PSRS). A compositionally biased stretch (pro residues) spans 170–182 (TPPPGPGPGPCPG). Residues 183–194 (PASASPASPSPA) are compositionally biased toward low complexity. A coiled-coil region spans residues 209 to 351 (ALEKLEVDRR…QLQVISSSCG (143 aa)). The segment covering 347 to 356 (SSSCGSTPSA) has biased composition (polar residues). The span at 359–368 (GRGGGGGGAG) shows a compositional bias: gly residues. R360 is modified (omega-N-methylarginine). Polar residues predominate over residues 395 to 416 (HGSSPSTGASSRVPAASQSSGC). A Phosphoserine modification is found at S478. Residue T479 is modified to Phosphothreonine. Residues 496–540 (SEAEGPLDAPRPGPAMAGPLSSCRLSARPEGGSGRGRRAERVSPS) enclose the F-box domain. S762 is modified (phosphoserine).

In terms of assembly, directly interacts with SKP1 and CUL1.

Functionally, substrate-recognition component of the SCF (SKP1-CUL1-F-box protein)-type E3 ubiquitin ligase complex. The polypeptide is F-box only protein 41 (FBXO41) (Homo sapiens (Human)).